Here is a 118-residue protein sequence, read N- to C-terminus: Large ribosomal subunit protein bL19 (118 aa).

The protein belongs to the bacterial ribosomal protein bL19 family.

This protein is located at the 30S-50S ribosomal subunit interface and may play a role in the structure and function of the aminoacyl-tRNA binding site. In Geotalea daltonii (strain DSM 22248 / JCM 15807 / FRC-32) (Geobacter daltonii), this protein is Large ribosomal subunit protein bL19.